The primary structure comprises 161 residues: Allophycocyanin beta chain (161 aa).

The residue at position 71 (N71) is an N4-methylasparagine. C81 is a binding site for (2R,3E)-phycocyanobilin.

It belongs to the phycobiliprotein family. Heterodimer of an alpha and a beta chain. In terms of processing, contains one covalently linked phycocyanobilin chromophore.

The protein localises to the cellular thylakoid membrane. In terms of biological role, light-harvesting photosynthetic bile pigment-protein from the phycobiliprotein complex. Allophycocyanin has a maximum absorption at approximately 650 nanometers. This chain is Allophycocyanin beta chain (apcB), found in Arthrospira platensis (Spirulina platensis).